The primary structure comprises 156 residues: SsrA-binding protein (156 aa).

It belongs to the SmpB family.

It localises to the cytoplasm. Functionally, required for rescue of stalled ribosomes mediated by trans-translation. Binds to transfer-messenger RNA (tmRNA), required for stable association of tmRNA with ribosomes. tmRNA and SmpB together mimic tRNA shape, replacing the anticodon stem-loop with SmpB. tmRNA is encoded by the ssrA gene; the 2 termini fold to resemble tRNA(Ala) and it encodes a 'tag peptide', a short internal open reading frame. During trans-translation Ala-aminoacylated tmRNA acts like a tRNA, entering the A-site of stalled ribosomes, displacing the stalled mRNA. The ribosome then switches to translate the ORF on the tmRNA; the nascent peptide is terminated with the 'tag peptide' encoded by the tmRNA and targeted for degradation. The ribosome is freed to recommence translation, which seems to be the essential function of trans-translation. The sequence is that of SsrA-binding protein from Maricaulis maris (strain MCS10) (Caulobacter maris).